Reading from the N-terminus, the 368-residue chain is MSNAPILLTPGPLTTSIRTRQAMLVDWGSWDRDFNQLTASVCEQLLAIIDGASSHHCVPLQGSGTFAVEAAIGTLVPRDGKVLVLINGAYGQRLAKICKVLGRTYSTFETAEDQPTTAADVDRLLAEDSAITHVALIHCETSTGILNPLPEIAQVIKHHGKRLIIDAMSSFGALPIDAREIPFEALIAASGKCLEGVPGMGFVFAEKNALAAAEGNAHSLAMDLHDQHAYMAKTGQWRFTPPTHVVAALHEALQQYNEEGGLPARHQRYADNCKTLLDGMAAIGLRSFLPAEIQAPIIVTFHAPTDARYQFKDFYERVKAKGFILYPGKLTQVETFRVGCIGVVGADGMQAAVNAVAEVLREMEVLDI.

The residue at position 192 (Lys192) is an N6-(pyridoxal phosphate)lysine.

This sequence belongs to the class-V pyridoxal-phosphate-dependent aminotransferase family. PhnW subfamily. Homodimer. Requires pyridoxal 5'-phosphate as cofactor.

It carries out the reaction (2-aminoethyl)phosphonate + pyruvate = phosphonoacetaldehyde + L-alanine. Its function is as follows. Involved in phosphonate degradation. This Pseudomonas putida (strain ATCC 700007 / DSM 6899 / JCM 31910 / BCRC 17059 / LMG 24140 / F1) protein is 2-aminoethylphosphonate--pyruvate transaminase.